Here is a 258-residue protein sequence, read N- to C-terminus: Glutamate racemase (258 aa).

Substrate contacts are provided by residues 11–12 (DS) and 43–44 (YG). Catalysis depends on cysteine 74, which acts as the Proton donor/acceptor. 75-76 (NT) contributes to the substrate binding site. Residue cysteine 182 is the Proton donor/acceptor of the active site. 183 to 184 (TH) contacts substrate.

The protein belongs to the aspartate/glutamate racemases family.

The enzyme catalyses L-glutamate = D-glutamate. It functions in the pathway cell wall biogenesis; peptidoglycan biosynthesis. Functionally, provides the (R)-glutamate required for cell wall biosynthesis. This is Glutamate racemase from Leptospira borgpetersenii serovar Hardjo-bovis (strain JB197).